Here is a 187-residue protein sequence, read N- to C-terminus: Crossover junction endodeoxyribonuclease RuvC (187 aa).

Residues aspartate 7, glutamate 67, and aspartate 140 contribute to the active site. Positions 7, 67, and 140 each coordinate Mg(2+).

This sequence belongs to the RuvC family. Homodimer which binds Holliday junction (HJ) DNA. The HJ becomes 2-fold symmetrical on binding to RuvC with unstacked arms; it has a different conformation from HJ DNA in complex with RuvA. In the full resolvosome a probable DNA-RuvA(4)-RuvB(12)-RuvC(2) complex forms which resolves the HJ. Requires Mg(2+) as cofactor.

It is found in the cytoplasm. It catalyses the reaction Endonucleolytic cleavage at a junction such as a reciprocal single-stranded crossover between two homologous DNA duplexes (Holliday junction).. Its function is as follows. The RuvA-RuvB-RuvC complex processes Holliday junction (HJ) DNA during genetic recombination and DNA repair. Endonuclease that resolves HJ intermediates. Cleaves cruciform DNA by making single-stranded nicks across the HJ at symmetrical positions within the homologous arms, yielding a 5'-phosphate and a 3'-hydroxyl group; requires a central core of homology in the junction. The consensus cleavage sequence is 5'-(A/T)TT(C/G)-3'. Cleavage occurs on the 3'-side of the TT dinucleotide at the point of strand exchange. HJ branch migration catalyzed by RuvA-RuvB allows RuvC to scan DNA until it finds its consensus sequence, where it cleaves and resolves the cruciform DNA. This Chlorobaculum parvum (strain DSM 263 / NCIMB 8327) (Chlorobium vibrioforme subsp. thiosulfatophilum) protein is Crossover junction endodeoxyribonuclease RuvC.